A 530-amino-acid polypeptide reads, in one-letter code: NADH-quinone oxidoreductase subunit C/D (530 aa).

The segment at 1-144 (MEEIKYIEPA…NPLRMDNEET (144 aa)) is NADH dehydrogenase I subunit C. Positions 171-530 (EYVVNIGPQH…LDYVVPDIDR (360 aa)) are NADH dehydrogenase I subunit D.

In the N-terminal section; belongs to the complex I 30 kDa subunit family. The protein in the C-terminal section; belongs to the complex I 49 kDa subunit family. In terms of assembly, NDH-1 is composed of 13 different subunits. Subunits NuoB, CD, E, F, and G constitute the peripheral sector of the complex.

The protein resides in the cell inner membrane. It catalyses the reaction a quinone + NADH + 5 H(+)(in) = a quinol + NAD(+) + 4 H(+)(out). Its function is as follows. NDH-1 shuttles electrons from NADH, via FMN and iron-sulfur (Fe-S) centers, to quinones in the respiratory chain. The immediate electron acceptor for the enzyme in this species is believed to be a menaquinone. Couples the redox reaction to proton translocation (for every two electrons transferred, four hydrogen ions are translocated across the cytoplasmic membrane), and thus conserves the redox energy in a proton gradient. This is NADH-quinone oxidoreductase subunit C/D from Bacteroides fragilis (strain ATCC 25285 / DSM 2151 / CCUG 4856 / JCM 11019 / LMG 10263 / NCTC 9343 / Onslow / VPI 2553 / EN-2).